Reading from the N-terminus, the 249-residue chain is tRNA pseudouridine synthase A (249 aa).

D53 serves as the catalytic Nucleophile. Residue Y111 participates in substrate binding.

Belongs to the tRNA pseudouridine synthase TruA family. In terms of assembly, homodimer.

The enzyme catalyses uridine(38/39/40) in tRNA = pseudouridine(38/39/40) in tRNA. Its function is as follows. Formation of pseudouridine at positions 38, 39 and 40 in the anticodon stem and loop of transfer RNAs. In Streptococcus pneumoniae (strain P1031), this protein is tRNA pseudouridine synthase A.